The sequence spans 142 residues: uncharacterized protein (142 aa).

Residues 1–9 (MDMVSPVLN) lie on the Cytoplasmic side of the membrane. Residues 10-30 (LQSSILGELVGIIGKVFFLLI) form a helical membrane-spanning segment. Over 31-41 (EEIKYPIITPK) the chain is Extracellular. The chain crosses the membrane as a helical span at residues 42-62 (IIVDAQISSWSLFFFASICNL). Residues 63–101 (SAKFREPIVTTSSIISLMESEKDLKNVNEYFQIMAKMLF) are Cytoplasmic-facing. The chain crosses the membrane as a helical span at residues 102–122 (ILENKIVVSLFVVFNISVLII). Residues 123–142 (VKSEPYSYGKVLFKPSSSIF) are Extracellular-facing.

The protein localises to the membrane. This is an uncharacterized protein from Saccharomyces cerevisiae (strain ATCC 204508 / S288c) (Baker's yeast).